The chain runs to 266 residues: Secreted RxLR effector protein 128 (266 aa).

The signal sequence occupies residues 1 to 18; it reads MRGAFYTAIALLIGRSQT. The RxLR-dEER motif lies at 48-63; sequence RYLRDGLAHSATNEER.

This sequence belongs to the RxLR effector family.

Its subcellular location is the secreted. The protein localises to the host nucleus. Functionally, secreted effector that dos not suppress the host cell death induced by cell death-inducing proteins. The polypeptide is Secreted RxLR effector protein 128 (Plasmopara viticola (Downy mildew of grapevine)).